We begin with the raw amino-acid sequence, 129 residues long: Small ribosomal subunit protein uS11 (129 aa).

This sequence belongs to the universal ribosomal protein uS11 family. As to quaternary structure, part of the 30S ribosomal subunit. Interacts with proteins S7 and S18. Binds to IF-3.

Located on the platform of the 30S subunit, it bridges several disparate RNA helices of the 16S rRNA. Forms part of the Shine-Dalgarno cleft in the 70S ribosome. This chain is Small ribosomal subunit protein uS11, found in Actinobacillus succinogenes (strain ATCC 55618 / DSM 22257 / CCUG 43843 / 130Z).